We begin with the raw amino-acid sequence, 378 residues long: Septin-5 (378 aa).

A Septin-type G domain is found at 50–323; sequence KGFDFTLMVA…ENYRAHCIQQ (274 aa). Residues 60-67 form a G1 motif region; that stretch reads GESGLGKS. GTP contacts are provided by residues 60–67, threonine 94, and glycine 120; that span reads GESGLGKS. The segment at 117-120 is G3 motif; that stretch reads DTPG. Arginine 177 is modified (omega-N-methylarginine). Residues 198 to 201 are G4 motif; sequence AKAD. Residue 199–207 participates in GTP binding; sequence KADCLVPSE. At serine 234 the chain carries Phosphoserine. GTP contacts are provided by glycine 257 and arginine 272. Serine 336 carries the phosphoserine modification. The residue at position 345 (threonine 345) is a Phosphothreonine. Residues 347 to 378 are a coiled coil; that stretch reads DAETEKLIRMKDEELRRMQEMLQRMKQQMQDQ.

It belongs to the TRAFAC class TrmE-Era-EngA-EngB-Septin-like GTPase superfamily. Septin GTPase family. In terms of assembly, septins polymerize into heterooligomeric protein complexes that form filaments, and can associate with cellular membranes, actin filaments and microtubules. GTPase activity is required for filament formation. Interacts with SEPTIN2 and SEPTIN5. In platelets, associated with a complex containing STX4. Interacts with PRKN; this interaction leads to SEPTIN5 ubiquitination and degradation. Interacts with DYRK1A. Interacts with STX1A; in the cerebellar cortex. Phosphorylated by DYRK1A.

It localises to the cytoplasm. The protein resides in the cytoskeleton. In terms of biological role, filament-forming cytoskeletal GTPase. May play a role in cytokinesis (Potential). May play a role in platelet secretion. This is Septin-5 from Macaca fascicularis (Crab-eating macaque).